The following is a 315-amino-acid chain: MTTNNFSHTSVLLDEAVNGLNIKPSGIYIDGTFGRGGHSRLILSQLGEQGRLIAIDRDPQAIAVANEIDDPRFSIIHGPFSNIEHYINELGLSGKVDGVLLDLGVSSPQLDDPERGFSFMRDGPLDMRMDPTTGQSAAQWLMNAEEDDITWVLKTFGEERFAKRIARAIVARNKTEEPLTRTKQLADLISEASPVKERHKHPATRSFQAIRIYINSELDEIEKALKGAVSILAPAGRLSVISFHSLEDRLVKRFIRDESKGPVVPAGIPLTEEQIKALGSARLSSIHKMKPTGVEVEENPRARSSVLRVAQRIEE.

Residues 36–38 (GGH), D56, F80, D102, and Q109 each bind S-adenosyl-L-methionine.

The protein belongs to the methyltransferase superfamily. RsmH family.

Its subcellular location is the cytoplasm. It catalyses the reaction cytidine(1402) in 16S rRNA + S-adenosyl-L-methionine = N(4)-methylcytidine(1402) in 16S rRNA + S-adenosyl-L-homocysteine + H(+). Functionally, specifically methylates the N4 position of cytidine in position 1402 (C1402) of 16S rRNA. The chain is Ribosomal RNA small subunit methyltransferase H from Proteus mirabilis (strain HI4320).